A 114-amino-acid polypeptide reads, in one-letter code: Large ribosomal subunit protein uL22 (114 aa).

It belongs to the universal ribosomal protein uL22 family. In terms of assembly, part of the 50S ribosomal subunit.

Its function is as follows. This protein binds specifically to 23S rRNA; its binding is stimulated by other ribosomal proteins, e.g. L4, L17, and L20. It is important during the early stages of 50S assembly. It makes multiple contacts with different domains of the 23S rRNA in the assembled 50S subunit and ribosome. The globular domain of the protein is located near the polypeptide exit tunnel on the outside of the subunit, while an extended beta-hairpin is found that lines the wall of the exit tunnel in the center of the 70S ribosome. The polypeptide is Large ribosomal subunit protein uL22 (Streptococcus pneumoniae (strain Taiwan19F-14)).